The sequence spans 341 residues: Alpha-1,4-N-acetylglucosaminyltransferase (341 aa).

Residues 1 to 4 (MLKE) are Cytoplasmic-facing. A helical; Signal-anchor for type II membrane protein membrane pass occupies residues 5 to 25 (IYLSLSLVLVFACGLLYQLTM). Residues 26 to 341 (RSQCFFACLP…VSKKPGTGSR (316 aa)) are Lumenal-facing. Residue Asn-100 is glycosylated (N-linked (GlcNAc...) asparagine). The DXD motif signature appears at 168-170 (DTD).

It belongs to the glycosyltransferase 32 family.

The protein resides in the golgi apparatus membrane. It functions in the pathway protein modification; protein glycosylation. Its function is as follows. Catalyzes the transfer of N-acetylglucosamine (GlcNAc) to core 2 branched O-glycans. Necessary for the synthesis of type III mucin which is specifically produced in the stomach, duodenum, and pancreatic duct. May protect against inflammation-associated gastric adenocarcinoma. This Mus musculus (Mouse) protein is Alpha-1,4-N-acetylglucosaminyltransferase.